Reading from the N-terminus, the 175-residue chain is Inorganic pyrophosphatase (175 aa).

Substrate contacts are provided by lysine 30, arginine 44, and tyrosine 56. Residues aspartate 66, aspartate 71, and aspartate 103 each contribute to the Mg(2+) site. Residue tyrosine 142 coordinates substrate.

Belongs to the PPase family. In terms of assembly, homohexamer. Mg(2+) is required as a cofactor.

Its subcellular location is the cytoplasm. It carries out the reaction diphosphate + H2O = 2 phosphate + H(+). Catalyzes the hydrolysis of inorganic pyrophosphate (PPi) forming two phosphate ions. The protein is Inorganic pyrophosphatase of Haemophilus ducreyi (strain 35000HP / ATCC 700724).